The primary structure comprises 72 residues: Translation initiation factor IF-1 (72 aa).

The 72-residue stretch at 1–72 (MAKEGNIEME…SKGRIVYRAR (72 aa)) folds into the S1-like domain.

This sequence belongs to the IF-1 family. As to quaternary structure, component of the 30S ribosomal translation pre-initiation complex which assembles on the 30S ribosome in the order IF-2 and IF-3, IF-1 and N-formylmethionyl-tRNA(fMet); mRNA recruitment can occur at any time during PIC assembly.

It localises to the cytoplasm. One of the essential components for the initiation of protein synthesis. Stabilizes the binding of IF-2 and IF-3 on the 30S subunit to which N-formylmethionyl-tRNA(fMet) subsequently binds. Helps modulate mRNA selection, yielding the 30S pre-initiation complex (PIC). Upon addition of the 50S ribosomal subunit IF-1, IF-2 and IF-3 are released leaving the mature 70S translation initiation complex. In Hahella chejuensis (strain KCTC 2396), this protein is Translation initiation factor IF-1.